Consider the following 536-residue polypeptide: Peptide chain release factor 3 (536 aa).

Residues 13–281 (SHRRTFAIIS…ALIDWAPAPQ (269 aa)) form the tr-type G domain. GTP is bound by residues 22–29 (SHPDAGKT), 90–94 (DTPGH), and 144–147 (NKCD).

The protein belongs to the TRAFAC class translation factor GTPase superfamily. Classic translation factor GTPase family. PrfC subfamily.

It localises to the cytoplasm. Functionally, increases the formation of ribosomal termination complexes and stimulates activities of RF-1 and RF-2. It binds guanine nucleotides and has strong preference for UGA stop codons. It may interact directly with the ribosome. The stimulation of RF-1 and RF-2 is significantly reduced by GTP and GDP, but not by GMP. This Chromobacterium violaceum (strain ATCC 12472 / DSM 30191 / JCM 1249 / CCUG 213 / NBRC 12614 / NCIMB 9131 / NCTC 9757 / MK) protein is Peptide chain release factor 3.